Consider the following 361-residue polypeptide: Free fatty acid receptor 4 (361 aa).

The disordered stretch occupies residues 1-21 (MSPECAQTTGPGPSRTPDQVN). Over 1-45 (MSPECAQTTGPGPSRTPDQVNRTHFPFFSDVKGDHRLVLSVLETT) the chain is Extracellular. Asn-21 carries an N-linked (GlcNAc...) asparagine glycan. The chain crosses the membrane as a helical span at residues 46-66 (VLGLIFVVSLLGNVCALVLVV). The Cytoplasmic portion of the chain corresponds to 67–77 (RRRRRGATVSL). The chain crosses the membrane as a helical span at residues 78-98 (VLNLFCADLLFTSAIPLVLVV). Topologically, residues 99–103 (RWTEA) are extracellular. Residues 104–124 (WLLGPVVCHLLFYVMTMSGSV) form a helical membrane-spanning segment. A disulfide bridge connects residues Cys-111 and Cys-194. Residues 125-156 (TILTLAAVSLERMVCIVRLRRGLSGPGRRTQA) are Cytoplasmic-facing. Residues 157–177 (ALLAFIWGYSALAALPLCILF) form a helical membrane-spanning segment. Topologically, residues 178 to 204 (RVVPQRLPGGDQEIPICTLDWPNRIGE) are extracellular. Residues 205 to 225 (ISWDVFFVTLNFLVPGLVIVI) traverse the membrane as a helical segment. The Cytoplasmic segment spans residues 226 to 268 (SYSKILQITKASRKRLTLSLAYSESHQIRVSQQDYRLFRTLFL). The chain crosses the membrane as a helical span at residues 269–289 (LMVSFFIMWSPIIITILLILI). Over 290–295 (QNFRQD) the chain is Extracellular. A helical membrane pass occupies residues 296–316 (LVIWPSLFFWVVAFTFANSAL). Residues 317 to 361 (NPILYNMSLFRSEWRKIFCCFFFPEKGAIFTETSIRRNDLSVIST) are Cytoplasmic-facing. Residues Thr-347 and Thr-349 each carry the phosphothreonine modification. 3 positions are modified to phosphoserine: Ser-350, Ser-357, and Ser-360.

It belongs to the G-protein coupled receptor 1 family. As to quaternary structure, interacts (via C-terminus) with ARRB2 following LCFAs stimulation. Phosphorylated at two clusters of Ser and Thr residues located in the intracellular C-terminus. Prerequisite for FFAR4 internalization via an ARRB2-dependent pathway.

It is found in the cell membrane. The protein resides in the endosome membrane. It localises to the lysosome membrane. The protein localises to the cell projection. Its subcellular location is the cilium membrane. In terms of biological role, G-protein-coupled receptor for long-chain fatty acids (LCFAs) with a major role in adipogenesis, energy metabolism and inflammation. Signals via G-protein and beta-arrestin pathways. LCFAs sensing initiates activation of phosphoinositidase C-linked G proteins GNAQ and GNA11 (G(q)/G(11)), inducing a variety of cellular responses via second messenger pathways such as intracellular calcium mobilization, modulation of cyclic adenosine monophosphate (cAMP) production, and mitogen-activated protein kinases (MAPKs). After LCFAs binding, associates with beta-arrestin ARRB2 that acts as an adapter protein coupling the receptor to specific downstream signaling pathways, as well as mediating receptor endocytosis. In response to dietary fats, plays an important role in the regulation of adipocyte proliferation and differentiation. Acts as a receptor for omega-3 polyunsaturated fatty acids (PUFAs) at primary cilium of perivascular preadipocytes, initiating an adipogenic program via cAMP and CTCF-dependent chromatin remodeling that ultimately results in transcriptional activation of adipogenic genes and cell cycle entry. Induces differentiation of brown and beige adipocytes probably via autocrine and endocrine functions of FGF21 hormone. Contributes to the thermogenic activation of brown adipose tissue and the browning of white adipose tissue. Activates brown adipocytes by initiating intracellular calcium signaling leading to mitochondrial depolarization and fission, and overall increased mitochondrial respiration. Consequently stimulates fatty acid uptake and oxidation in mitochondria together with UCP1-mediated thermogenic respiration, eventually reducing fat mass. Regulates bi-potential differentiation of bone marrow mesenchymal stem cells toward osteoblasts or adipocytes likely by up-regulating distinct integrins. In response to dietary fats regulates hormone secretion and appetite. Stimulates GIP and GLP1 secretion from enteroendocrine cells as well as GCG secretion in pancreatic alpha cells, thereby playing a role in the regulation of blood glucose levels. Negatively regulates glucose-induced SST secretion in pancreatic delta cells. Mediates LCFAs inhibition of GHRL secretion, an appetite-controlling hormone. In taste buds, contributes to sensing of dietary fatty acids by the gustatory system. During the inflammatory response, promotes anti-inflammatory M2 macrophage differentiation in adipose tissue. Mediates the anti-inflammatory effects of omega-3 PUFAs via inhibition of NLRP3 inflammasome activation. In this pathway, interacts with adapter protein ARRB2 and inhibits the priming step triggered by Toll-like receptors (TLRs) at the level of TAK1 and TAB1. Further inhibits the activation step when ARRB2 directly associates with NLRP3, leading to inhibition of pro-inflammatory cytokine release. Mediates LCFAs anti-apoptotic effects. This Rattus norvegicus (Rat) protein is Free fatty acid receptor 4 (Ffar4).